The following is a 353-amino-acid chain: Nicotinate-nucleotide--dimethylbenzimidazole phosphoribosyltransferase (353 aa).

Residue glutamate 318 is the Proton acceptor of the active site.

It belongs to the CobT family.

It catalyses the reaction 5,6-dimethylbenzimidazole + nicotinate beta-D-ribonucleotide = alpha-ribazole 5'-phosphate + nicotinate + H(+). It participates in nucleoside biosynthesis; alpha-ribazole biosynthesis; alpha-ribazole from 5,6-dimethylbenzimidazole: step 1/2. In terms of biological role, catalyzes the synthesis of alpha-ribazole-5'-phosphate from nicotinate mononucleotide (NAMN) and 5,6-dimethylbenzimidazole (DMB). The polypeptide is Nicotinate-nucleotide--dimethylbenzimidazole phosphoribosyltransferase (Roseiflexus castenholzii (strain DSM 13941 / HLO8)).